Here is a 174-residue protein sequence, read N- to C-terminus: NADPH-dependent 7-cyano-7-deazaguanine reductase (174 aa).

The Thioimide intermediate role is filled by C72. Catalysis depends on D79, which acts as the Proton donor. Substrate contacts are provided by residues 94–96 and 113–114; these read VES and HE.

This sequence belongs to the GTP cyclohydrolase I family. QueF type 1 subfamily.

Its subcellular location is the cytoplasm. It carries out the reaction 7-aminomethyl-7-carbaguanine + 2 NADP(+) = 7-cyano-7-deazaguanine + 2 NADPH + 3 H(+). Its pathway is tRNA modification; tRNA-queuosine biosynthesis. In terms of biological role, catalyzes the NADPH-dependent reduction of 7-cyano-7-deazaguanine (preQ0) to 7-aminomethyl-7-deazaguanine (preQ1). The sequence is that of NADPH-dependent 7-cyano-7-deazaguanine reductase from Synechococcus elongatus (strain ATCC 33912 / PCC 7942 / FACHB-805) (Anacystis nidulans R2).